Consider the following 818-residue polypeptide: G-type lectin S-receptor-like serine/threonine-protein kinase At1g67520 (818 aa).

The first 22 residues, 1–22 (MCSNGIFVSLLTLSLLLGKSCS), serve as a signal peptide directing secretion. The Extracellular segment spans residues 23–387 (ETDTLHQGQF…NENKKVAAWH (365 aa)). The Bulb-type lectin domain maps to 24–149 (TDTLHQGQFL…DADGSMKRVL (126 aa)). 3 N-linked (GlcNAc...) asparagine glycosylation sites follow: Asn123, Asn199, and Asn337. The region spanning 290-379 (CLAAGYVVRD…PRTIYIRGNE (90 aa)) is the PAN domain. 2 disulfides stabilise this stretch: Cys330–Cys353 and Cys334–Cys340. A helical transmembrane segment spans residues 388-408 (IVVATLFLMTPIIWFIIYLVL). Topologically, residues 409 to 818 (RKFNVKGRNC…SITITVLEAR (410 aa)) are cytoplasmic. One can recognise a Protein kinase domain in the interval 496–785 (FSDENKLGEG…ALSLPKEPAF (290 aa)). Residues 502–510 (LGEGGFGPV) and Lys524 each bind ATP. Phosphoserine is present on Ser530. Residues 585 to 602 (LRKNVLDWTLRFRIMEGI) are caM-binding. Residue Asp621 is the Proton acceptor of the active site. Phosphoserine is present on residues Ser625 and Ser638. At Thr655 the chain carries Phosphothreonine. Phosphoserine occurs at positions 699 and 807. The residue at position 813 (Thr813) is a Phosphothreonine.

This sequence belongs to the protein kinase superfamily. Ser/Thr protein kinase family.

The protein resides in the cell membrane. It carries out the reaction L-seryl-[protein] + ATP = O-phospho-L-seryl-[protein] + ADP + H(+). The enzyme catalyses L-threonyl-[protein] + ATP = O-phospho-L-threonyl-[protein] + ADP + H(+). The chain is G-type lectin S-receptor-like serine/threonine-protein kinase At1g67520 from Arabidopsis thaliana (Mouse-ear cress).